The sequence spans 145 residues: Large ribosomal subunit protein uL15 (145 aa).

The segment at 20 to 39 (GRVGKHRKHPSGRGNAGGEH) is disordered.

It belongs to the universal ribosomal protein uL15 family.

The sequence is that of Large ribosomal subunit protein uL15 (RPL27A) from Trypanosoma brucei brucei.